The primary structure comprises 121 residues: UPF0045 protein sll0230 (121 aa).

Belongs to the UPF0045 family.

This Synechocystis sp. (strain ATCC 27184 / PCC 6803 / Kazusa) protein is UPF0045 protein sll0230.